The sequence spans 128 residues: Spore germination protein 1/2/3-related protein (128 aa).

A signal peptide spans 1 to 26 (MNIRNTLVLLVSTVLVLMSCSIGCYA). N-linked (GlcNAc...) asparagine glycosylation is found at asparagine 55 and asparagine 119.

The protein belongs to the Dictyostelium gerABC family.

The protein localises to the secreted. The sequence is that of Spore germination protein 1/2/3-related protein from Dictyostelium discoideum (Social amoeba).